We begin with the raw amino-acid sequence, 602 residues long: DEAD-box ATP-dependent RNA helicase 53 (602 aa).

Residues 33–43 are compositionally biased toward low complexity; that stretch reads ASPLDPCRGPA. The segment at 33–76 is disordered; it reads ASPLDPCRGPAAPEPPRRRAFHGSPSPLGFRSTPASWSSPEAGA. Residues 84–112 carry the Q motif motif; the sequence is LEVARLGISPWIVERLAARGITRLFPIQR. A Helicase ATP-binding domain is found at 115 to 288; that stretch reads LDPAMQGKDM…SKYLKDPIII (174 aa). 128–135 provides a ligand contact to ATP; it reads ARTGTGKT. A DEAD box motif is present at residues 236-239; the sequence is DEAD. A Helicase C-terminal domain is found at 317-462; the sequence is ILGPLIKEHA…LPKIEVADEA (146 aa). Positions 503–602 are disordered; the sequence is FGDFDGFGSS…GRSGGFDDSN (100 aa).

It belongs to the DEAD box helicase family. DDX21/DDX50 subfamily.

The enzyme catalyses ATP + H2O = ADP + phosphate + H(+). The polypeptide is DEAD-box ATP-dependent RNA helicase 53 (Oryza sativa subsp. japonica (Rice)).